Reading from the N-terminus, the 175-residue chain is NADH-ubiquinone oxidoreductase chain 6 (175 aa).

The next 5 membrane-spanning stretches (helical) occupy residues 1-21, 25-45, 47-67, 88-108, and 149-169; these read MMIY…VGFS, SPIY…GIVM, FGGS…MLVV, TVLS…LYMF, and YGVW…LVVL.

The protein belongs to the complex I subunit 6 family. Core subunit of respiratory chain NADH dehydrogenase (Complex I) which is composed of 45 different subunits.

The protein localises to the mitochondrion inner membrane. It catalyses the reaction a ubiquinone + NADH + 5 H(+)(in) = a ubiquinol + NAD(+) + 4 H(+)(out). Its function is as follows. Core subunit of the mitochondrial membrane respiratory chain NADH dehydrogenase (Complex I) which catalyzes electron transfer from NADH through the respiratory chain, using ubiquinone as an electron acceptor. Essential for the catalytic activity and assembly of complex I. This Rhinoceros unicornis (Greater Indian rhinoceros) protein is NADH-ubiquinone oxidoreductase chain 6 (MT-ND6).